The primary structure comprises 172 residues: Shikimate kinase (172 aa).

Position 11-16 (11-16 (GAGKST)) interacts with ATP. Ser15 contributes to the Mg(2+) binding site. Substrate contacts are provided by Asp33, Arg57, and Gly79. Residue Arg117 coordinates ATP. Arg136 contacts substrate. Arg153 contributes to the ATP binding site.

Belongs to the shikimate kinase family. Monomer. Mg(2+) serves as cofactor.

It localises to the cytoplasm. The enzyme catalyses shikimate + ATP = 3-phosphoshikimate + ADP + H(+). It participates in metabolic intermediate biosynthesis; chorismate biosynthesis; chorismate from D-erythrose 4-phosphate and phosphoenolpyruvate: step 5/7. Catalyzes the specific phosphorylation of the 3-hydroxyl group of shikimic acid using ATP as a cosubstrate. The chain is Shikimate kinase from Pseudomonas entomophila (strain L48).